The primary structure comprises 138 residues: Integration host factor subunit beta (138 aa).

Positions 81 to 98 (KAGKELRERVDRSLERQG) are enriched in basic and acidic residues. The segment at 81 to 138 (KAGKELRERVDRSLERQGDSSSEGEPVSLTAVKAARQAGGHHAAGFPAEATPTLVMSR) is disordered.

This sequence belongs to the bacterial histone-like protein family. As to quaternary structure, heterodimer of an alpha and a beta chain.

This protein is one of the two subunits of integration host factor, a specific DNA-binding protein that functions in genetic recombination as well as in transcriptional and translational control. The sequence is that of Integration host factor subunit beta from Ralstonia nicotianae (strain ATCC BAA-1114 / GMI1000) (Ralstonia solanacearum).